Consider the following 411-residue polypeptide: uncharacterized protein (411 aa).

The protein in the C-terminal section; belongs to the PAPS reductase family.

This is an uncharacterized protein from Methanocaldococcus jannaschii (strain ATCC 43067 / DSM 2661 / JAL-1 / JCM 10045 / NBRC 100440) (Methanococcus jannaschii).